A 128-amino-acid polypeptide reads, in one-letter code: S-protein homolog 5 (128 aa).

An N-terminal signal peptide occupies residues 1–20 (MEKVSIVCFFFFLLFGSGYG).

Belongs to the plant self-incompatibility (S1) protein family.

It localises to the secreted. This Arabidopsis thaliana (Mouse-ear cress) protein is S-protein homolog 5.